The following is a 588-amino-acid chain: Lysophospholipase 2 (588 aa).

The disordered stretch occupies residues 15 to 38; that stretch reads NRALPNAPDGYTPQGETCPSKRPS. The region spanning 31–574 is the PLA2c domain; the sequence is TCPSKRPSIR…KTYCWNGTIN (544 aa). N-linked (GlcNAc...) asparagine glycans are attached at residues N41, N58, N77, N84, N88, N119, N123, N157, N167, N228, N272, N302, N340, N431, N449, N478, N481, N501, N510, N529, N553, N570, and N574.

Belongs to the lysophospholipase family.

It carries out the reaction a 1-acyl-sn-glycero-3-phosphocholine + H2O = sn-glycerol 3-phosphocholine + a fatty acid + H(+). Catalyzes the release of fatty acids from lysophospholipids. The chain is Lysophospholipase 2 (plb2) from Aspergillus fumigatus (strain ATCC MYA-4609 / CBS 101355 / FGSC A1100 / Af293) (Neosartorya fumigata).